A 468-amino-acid polypeptide reads, in one-letter code: Uronate isomerase (468 aa).

Belongs to the metallo-dependent hydrolases superfamily. Uronate isomerase family.

The enzyme catalyses D-glucuronate = D-fructuronate. The catalysed reaction is aldehydo-D-galacturonate = keto-D-tagaturonate. It participates in carbohydrate metabolism; pentose and glucuronate interconversion. In Lachnospira eligens (strain ATCC 27750 / DSM 3376 / VPI C15-48 / C15-B4) (Eubacterium eligens), this protein is Uronate isomerase.